A 61-amino-acid chain; its full sequence is Small ribosomal subunit protein bS21 (61 aa).

It belongs to the bacterial ribosomal protein bS21 family.

This is Small ribosomal subunit protein bS21 from Methylacidiphilum infernorum (isolate V4) (Methylokorus infernorum (strain V4)).